Here is a 435-residue protein sequence, read N- to C-terminus: Ribulose bisphosphate carboxylase large chain (435 aa).

Position 5 is an N6,N6,N6-trimethyllysine (Lys5). Residues Asn114 and Thr164 each coordinate substrate. Catalysis depends on Lys166, which acts as the Proton acceptor. Lys168 is a binding site for substrate. Mg(2+)-binding residues include Lys192, Asp194, and Glu195. The residue at position 192 (Lys192) is an N6-carboxylysine. His285 acts as the Proton acceptor in catalysis. Positions 286, 318, and 370 each coordinate substrate.

This sequence belongs to the RuBisCO large chain family. Type I subfamily. Heterohexadecamer of 8 large chains and 8 small chains; disulfide-linked. The disulfide link is formed within the large subunit homodimers. Mg(2+) is required as a cofactor. Post-translationally, the disulfide bond which can form in the large chain dimeric partners within the hexadecamer appears to be associated with oxidative stress and protein turnover.

It localises to the plastid. The protein resides in the chloroplast. It catalyses the reaction 2 (2R)-3-phosphoglycerate + 2 H(+) = D-ribulose 1,5-bisphosphate + CO2 + H2O. It carries out the reaction D-ribulose 1,5-bisphosphate + O2 = 2-phosphoglycolate + (2R)-3-phosphoglycerate + 2 H(+). In terms of biological role, ruBisCO catalyzes two reactions: the carboxylation of D-ribulose 1,5-bisphosphate, the primary event in carbon dioxide fixation, as well as the oxidative fragmentation of the pentose substrate in the photorespiration process. Both reactions occur simultaneously and in competition at the same active site. This is Ribulose bisphosphate carboxylase large chain from Drosera burmannii (Burmese sundew).